A 122-amino-acid polypeptide reads, in one-letter code: Basic phospholipase A2 F16 (122 aa).

Intrachain disulfides connect cysteine 26/cysteine 115, cysteine 28/cysteine 44, cysteine 43/cysteine 95, cysteine 49/cysteine 122, cysteine 50/cysteine 88, cysteine 57/cysteine 81, and cysteine 75/cysteine 86. Residues tyrosine 27, glycine 29, and glycine 31 each coordinate Ca(2+). Histidine 47 is a catalytic residue. Aspartate 48 serves as a coordination point for Ca(2+). Aspartate 89 is an active-site residue.

Belongs to the phospholipase A2 family. Group II subfamily. D49 sub-subfamily. Ca(2+) is required as a cofactor. As to expression, expressed by the venom gland.

It localises to the secreted. The catalysed reaction is a 1,2-diacyl-sn-glycero-3-phosphocholine + H2O = a 1-acyl-sn-glycero-3-phosphocholine + a fatty acid + H(+). With respect to regulation, pre-incubation with heparin markedly reduces the neurotoxicity of this toxin. Functionally, snake venom phospholipase A2 (PLA2) that produces neuromuscular blockade in chick biventer cervicis preparations in the absence and presence of crotapotin. In contrast, in mouse phrenic nerve-diaphragm preparations, the neuromuscular blockade is dependent on crotapotin. PLA2 catalyzes the calcium-dependent hydrolysis of the 2-acyl groups in 3-sn-phosphoglycerides. The polypeptide is Basic phospholipase A2 F16 (Crotalus durissus terrificus (South American rattlesnake)).